The following is a 306-amino-acid chain: tRNA pseudouridine synthase B (306 aa).

The Nucleophile role is filled by Asp-38.

The protein belongs to the pseudouridine synthase TruB family. Type 1 subfamily.

It catalyses the reaction uridine(55) in tRNA = pseudouridine(55) in tRNA. In terms of biological role, responsible for synthesis of pseudouridine from uracil-55 in the psi GC loop of transfer RNAs. This Syntrophotalea carbinolica (strain DSM 2380 / NBRC 103641 / GraBd1) (Pelobacter carbinolicus) protein is tRNA pseudouridine synthase B.